Here is a 427-residue protein sequence, read N- to C-terminus: Stabilizer of axonemal microtubules 4 (427 aa).

Disordered regions lie at residues 82–105 (TSKS…PLPW), 273–298 (RTLN…QPPQ), and 314–335 (GNKE…SYEQ). Composition is skewed to polar residues over residues 287–298 (ASMSHRSYQPPQ) and 321–332 (FTLNNPSYVRSS).

Microtubule inner protein component of sperm flagellar doublet microtubules. Interacts with PPP1CA.

It localises to the cell projection. Its subcellular location is the cilium. The protein localises to the cytoplasm. The protein resides in the cytoskeleton. It is found in the flagellum axoneme. The polypeptide is Stabilizer of axonemal microtubules 4 (Mus musculus (Mouse)).